Reading from the N-terminus, the 615-residue chain is DNA mismatch repair protein MutL (615 aa).

A disordered region spans residues Glu-370–Tyr-397. Low complexity predominate over residues Pro-378 to Pro-391.

The protein belongs to the DNA mismatch repair MutL/HexB family.

Its function is as follows. This protein is involved in the repair of mismatches in DNA. It is required for dam-dependent methyl-directed DNA mismatch repair. May act as a 'molecular matchmaker', a protein that promotes the formation of a stable complex between two or more DNA-binding proteins in an ATP-dependent manner without itself being part of a final effector complex. This is DNA mismatch repair protein MutL from Shigella dysenteriae serotype 1 (strain Sd197).